The chain runs to 249 residues: Major phosphate-irrepressible acid phosphatase (249 aa).

An N-terminal signal peptide occupies residues 1–20; it reads MKKNIIAGCLFSLFSLSALA.

Belongs to the class A bacterial acid phosphatase family. In terms of assembly, homotetramer.

Its subcellular location is the periplasm. It carries out the reaction a phosphate monoester + H2O = an alcohol + phosphate. In Morganella morganii (Proteus morganii), this protein is Major phosphate-irrepressible acid phosphatase (phoC).